The chain runs to 1344 residues: Myb-binding protein 1A (1344 aa).

The interval methionine 1–histidine 24 is disordered. N-acetylalanine is present on alanine 2. Residues alanine 2 to glutamate 580 are interaction with MYB. Low complexity predominate over residues proline 7–alanine 19. Residues lysine 69 and lysine 156 each carry the N6-acetyllysine modification. 2 short sequence motifs (nuclear export signal) span residues serine 238–valine 256 and lysine 261–phenylalanine 279. Disordered stretches follow at residues aspartate 710–valine 751 and glutamine 1146–proline 1344. Positions serine 732–arginine 747 are enriched in acidic residues. Basic and acidic residues predominate over residues proline 1148–proline 1159. Lysine 1149 is covalently cross-linked (Glycyl lysine isopeptide (Lys-Gly) (interchain with G-Cter in SUMO2)). The segment at lysine 1152–proline 1344 is required for nuclear and nucleolar localization. Residues serine 1160 and serine 1164 each carry the phosphoserine modification. Residues threonine 1168–leucine 1185 are compositionally biased toward basic residues. Serine 1187 is modified (phosphoserine). A compositionally biased stretch (polar residues) spans glutamate 1188 to alanine 1202. Threonine 1191 carries the phosphothreonine modification. Phosphoserine occurs at positions 1219 and 1244. Polar residues predominate over residues asparagine 1249 to alanine 1258. Threonine 1251 carries the post-translational modification Phosphothreonine. Serine 1253 is subject to Phosphoserine. Residues threonine 1256 and threonine 1277 each carry the phosphothreonine modification. 3 positions are modified to phosphoserine: serine 1280, serine 1303, and serine 1318. Over residues leucine 1317–serine 1329 the composition is skewed to low complexity. Position 1322 is a citrulline (arginine 1322). Phosphoserine is present on residues serine 1323, serine 1325, and serine 1329.

Belongs to the MYBBP1A family. As to quaternary structure, component of the B-WICH complex, at least composed of SMARCA5/SNF2H, BAZ1B/WSTF, SF3B1, DEK, MYO1C, ERCC6, MYBBP1A and DDX21. Binds to and represses JUN and MYB via the leucine zipper regions present in these proteins. Also binds to and represses PPARGC1A: this interaction is abrogated when PPARGC1A is phosphorylated by MAPK1/ERK. Binds to and stimulates transcription by AHR. Binds to KPNA2. Interacts with CLOCK and CRY1. In terms of processing, citrullinated by PADI4. In terms of tissue distribution, ubiquitously expressed.

It is found in the nucleus. Its subcellular location is the nucleolus. It localises to the cytoplasm. Its function is as follows. May activate or repress transcription via interactions with sequence specific DNA-binding proteins. Repression may be mediated at least in part by histone deacetylase activity (HDAC activity). Acts as a corepressor and in concert with CRY1, represses the transcription of the core circadian clock component PER2. Preferentially binds to dimethylated histone H3 'Lys-9' (H3K9me2) on the PER2 promoter. Has a role in rRNA biogenesis together with PWP1. The protein is Myb-binding protein 1A (Mybbp1a) of Mus musculus (Mouse).